Consider the following 456-residue polypeptide: Bifunctional protein GlmU (456 aa).

A pyrophosphorylase region spans residues 1-229 (MYKSAVILAA…PDEIKGVNSR (229 aa)). Residues 8 to 11 (LAAG), Lys-22, Gln-73, and 78 to 79 (GT) each bind UDP-N-acetyl-alpha-D-glucosamine. Asp-103 provides a ligand contact to Mg(2+). UDP-N-acetyl-alpha-D-glucosamine is bound by residues Gly-140, Glu-155, Asn-170, and Asn-227. Asn-227 contributes to the Mg(2+) binding site. Residues 230-250 (GQLAEAEEILRLRINERHMEN) form a linker region. The interval 251–456 (GVTLIDPKNT…GWVAKKGLKK (206 aa)) is N-acetyltransferase. UDP-N-acetyl-alpha-D-glucosamine is bound by residues Arg-332 and Lys-350. Residue His-362 is the Proton acceptor of the active site. UDP-N-acetyl-alpha-D-glucosamine-binding residues include Tyr-365 and Asn-376. Residues 385–386 (NY), Ala-422, and Arg-439 contribute to the acetyl-CoA site.

It in the N-terminal section; belongs to the N-acetylglucosamine-1-phosphate uridyltransferase family. This sequence in the C-terminal section; belongs to the transferase hexapeptide repeat family. Homotrimer. Requires Mg(2+) as cofactor.

It localises to the cytoplasm. The enzyme catalyses alpha-D-glucosamine 1-phosphate + acetyl-CoA = N-acetyl-alpha-D-glucosamine 1-phosphate + CoA + H(+). It catalyses the reaction N-acetyl-alpha-D-glucosamine 1-phosphate + UTP + H(+) = UDP-N-acetyl-alpha-D-glucosamine + diphosphate. The protein operates within nucleotide-sugar biosynthesis; UDP-N-acetyl-alpha-D-glucosamine biosynthesis; N-acetyl-alpha-D-glucosamine 1-phosphate from alpha-D-glucosamine 6-phosphate (route II): step 2/2. Its pathway is nucleotide-sugar biosynthesis; UDP-N-acetyl-alpha-D-glucosamine biosynthesis; UDP-N-acetyl-alpha-D-glucosamine from N-acetyl-alpha-D-glucosamine 1-phosphate: step 1/1. It functions in the pathway bacterial outer membrane biogenesis; LPS lipid A biosynthesis. Catalyzes the last two sequential reactions in the de novo biosynthetic pathway for UDP-N-acetylglucosamine (UDP-GlcNAc). The C-terminal domain catalyzes the transfer of acetyl group from acetyl coenzyme A to glucosamine-1-phosphate (GlcN-1-P) to produce N-acetylglucosamine-1-phosphate (GlcNAc-1-P), which is converted into UDP-GlcNAc by the transfer of uridine 5-monophosphate (from uridine 5-triphosphate), a reaction catalyzed by the N-terminal domain. In Clostridium novyi (strain NT), this protein is Bifunctional protein GlmU.